A 3010-amino-acid polypeptide reads, in one-letter code: Genome polyprotein (3010 aa).

Position 2 is an N-acetylserine; by host (Ser2). The tract at residues 2–23 (STNPKPQRKTKRNTYRRPQDVK) is interaction with STAT1. The interval 2 to 58 (STNPKPQRKTKRNTYRRPQDVKFPGGGQIVGGVYVLPRRGPTLGVRATRKTSERSQP) is interaction with EIF2AK2/PKR. Residues 2–59 (STNPKPQRKTKRNTYRRPQDVKFPGGGQIVGGVYVLPRRGPTLGVRATRKTSERSQPR) form an interaction with DDX3X region. Residues 2–75 (STNPKPQRKT…PKARRPEGRA (74 aa)) form a disordered region. The Cytoplasmic segment spans residues 2-168 (STNPKPQRKT…EDGVNYATGN (167 aa)). Short sequence motifs (nuclear localization signal) lie at residues 5–13 (PKPQRKTKR) and 38–43 (PRRGPT). Residues 7–16 (PQRKTKRNTY) show a composition bias toward basic residues. Ser53 carries the phosphoserine; by host modification. 2 short sequence motifs (nuclear localization signal) span residues 58 to 64 (PRGRRQP) and 66 to 71 (PKARRP). Over residues 58-68 (PRGRRQPIPKA) the composition is skewed to basic residues. Residue Ser99 is modified to Phosphoserine; by host. The interval 112–152 (PRRRSRNLGKVIDTLTCGFADLMGYIPLVGAPLGGAARALA) is important for endoplasmic reticulum and mitochondrial localization. Phosphoserine; by host PKA is present on Ser116. The tract at residues 122-173 (VIDTLTCGFADLMGYIPLVGAPLGGAARALAHGVRVLEDGVNYATGNLPGCS) is interaction with APOA2. An important for lipid droplets localization region spans residues 164 to 167 (YATG). The chain crosses the membrane as a helical span at residues 169-189 (LPGCSFSIFLLALLSCLTIPA). A propeptide spans 178–191 (LLALLSCLTIPASA) (ER anchor for the core protein, removed in mature form by host signal peptidase). Residues 190–358 (SAYQVRNASG…AGAHWGVLAG (169 aa)) are Lumenal-facing. N-linked (GlcNAc...) asparagine; by host glycans are attached at residues Asn196, Asn209, Asn234, and Asn250. The tract at residues 265–296 (LVGAAAFCSAMYVGDLCGSVFLVSQLFTFSPR) is important for fusion. Asn305 carries N-linked (GlcNAc...) asparagine; by host glycosylation. The chain crosses the membrane as a helical span at residues 359-379 (LAYYSMVGNWAKVLIVMLLFA). Topologically, residues 380-725 (GVDGVTYTTG…WEYIVLLFLL (346 aa)) are lumenal. Residues 385–411 (TYTTGGSQARHTQSVTSFFTQGPAQRI) form an HVR1 region. N-linked (GlcNAc...) (high mannose) asparagine; by host glycosylation is found at Asn417, Asn423, Asn430, and Asn448. 4 disulfides stabilise this stretch: Cys429–Cys552, Cys452–Cys459, Cys486–Cys494, and Cys503–Cys508. The tract at residues 474 to 479 (YTEPRD) is HVR2. Residues 480-493 (LDQRPYCWHYAPRQ) are CD81-binding 1. N-linked (GlcNAc...) (high mannose) asparagine; by host glycosylation occurs at Asn532. Asn540 carries N-linked (GlcNAc...) asparagine; by host glycosylation. The interval 544-551 (PPQGNWFG) is CD81-binding 2. Asn556 is a glycosylation site (N-linked (GlcNAc...) (high mannose) asparagine; by host). The cysteines at positions 564 and 569 are disulfide-linked. Asn576 carries an N-linked (GlcNAc...) (high mannose) asparagine; by host glycan. 3 disulfides stabilise this stretch: Cys581-Cys585, Cys597-Cys620, and Cys607-Cys644. Residues Asn623 and Asn645 are each glycosylated (N-linked (GlcNAc...) (high mannose) asparagine; by host). Residues Cys652 and Cys677 are joined by a disulfide bond. The interval 660–671 (SELSPLLLSTTE) is PKR/eIF2-alpha phosphorylation homology domain (PePHD). Residues 726 to 746 (LADARVCACLWMMLLIAQAEA) traverse the membrane as a helical segment. Over 747–757 (ALENLVVLNAA) the chain is Lumenal. Residues 758–778 (SLAGADGILSFLVFFCAAWYI) form a helical membrane-spanning segment. The Cytoplasmic segment spans residues 779-781 (KGR). Residues 782–803 (LVPGAAYALYGVWPLLLLLLAL) traverse the membrane as a helical segment. Over 804 to 813 (PPRAYAMDRE) the chain is Lumenal. Residues 814-834 (MAASCGGVVFVGLILLTLSPH) form a helical membrane-spanning segment. The Cytoplasmic segment spans residues 835-838 (YKVF). Residues 839-859 (LARLIWWLQYFITRAEAHLCV) traverse the membrane as a helical segment. Residues 860 to 881 (WVPPLNVRGGRDAIILLTCAAH) lie on the Lumenal side of the membrane. Residues 882 to 902 (PELIFDITKLLLAILGPLMVL) traverse the membrane as a helical segment. Positions 903-1026 (QAAITAMPYF…SIEGQGWRLL (124 aa)) constitute a Peptidase C18 domain. The Cytoplasmic segment spans residues 903-1657 (QAAITAMPYF…CMSADLEVVT (755 aa)). Positions 904–1206 (AAITAMPYFV…PVESMETTMR (303 aa)) are protease NS2-3. Cys922 is lipidated: S-palmitoyl cysteine; by host. An interaction with host SCPS1 region spans residues 929–949 (AGGHYVQMAFMKLAALTGTYV). Active-site for protease NS2 activity; shared with dimeric partner residues include His952, Glu972, and Cys993. Positions 1027–1208 (APITAYAQQT…ESMETTMRSP (182 aa)) constitute a Peptidase S29 domain. Active-site charge relay system; for serine protease NS3 activity residues include His1083 and Asp1107. Zn(2+) contacts are provided by Cys1123 and Cys1125. Ser1165 serves as the catalytic Charge relay system; for serine protease NS3 activity. Zn(2+)-binding residues include Cys1171 and His1175. Residues 1217 to 1369 (PAVPQTFQVA…PNIEEVALSN (153 aa)) form the Helicase ATP-binding domain. 1230 to 1237 (APTGSGKS) is a binding site for ATP. 2 residues coordinate Mg(2+): Ser1237 and Glu1317. The DECH box signature appears at 1316–1319 (DECH). The tract at residues 1486–1497 (QRRGRTGRGRGG) is RNA-binding. The helical transmembrane segment at 1658 to 1678 (STWVLVGGVLAALAAYCLTTG) threads the bilayer. Positions 1679-1690 (SVVIVGRIILSG) are NS3-binding. Residues 1679 to 1805 (SVVIVGRIIL…SITSPLTTQN (127 aa)) are Cytoplasmic-facing. The helical transmembrane segment at 1806–1824 (TLLFNILGGWVAAQLAPPS) threads the bilayer. Residues 1825 to 1828 (AASA) lie on the Lumenal side of the membrane. The helical transmembrane segment at 1829–1849 (FVGAGIAGAAIGSIGLGKVLV) threads the bilayer. A topological domain (cytoplasmic) is located at residue Asp1850. Residues 1851-1871 (ILAGYGAGVAGALVAFKVMSG) traverse the membrane as a helical segment. Residues 1872-1881 (EAPSAEDLVN) lie on the Lumenal side of the membrane. The helical transmembrane segment at 1882 to 1902 (LLPAILSPGALVVGVVCAAIL) threads the bilayer. At 1903 to 1972 (RRHVGPGEGA…WINEDCSTPC (70 aa)) the chain is on the cytoplasmic side. Residues Cys1968 and Cys1972 are each lipidated (S-palmitoyl cysteine; by host). The stretch at 1973–2002 (SGSWLKDVWDWICTVLTDFKTWLQSKLLPK) is an intramembrane region. The Cytoplasmic segment spans residues 2003–2989 (LPGVPFFSCQ…YHSLSRARPR (987 aa)). 4 residues coordinate Zn(2+): Cys2011, Cys2029, Cys2031, and Cys2052. Residues 2120-2208 (EFFTELDGVR…ASSSASQLSA (89 aa)) form an FKBP8-binding region. A transcriptional activation region spans residues 2120–2332 (EFFTELDGVR…PIPPPRKKRT (213 aa)). The segment at 2135 to 2139 (PACRP) is interaction with non-structural protein 4A. Residues 2187–2220 (KRRLARGSPPSLASSSASQLSAPSLKATCTTHHD) form a disordered region. Residues 2189–2441 (RLARGSPPSL…PCAAEESKLP (253 aa)) are interaction with host SKP2. Ser2194 is modified (phosphoserine; by host; in p56). The segment covering 2194-2211 (SPPSLASSSASQLSAPSL) has biased composition (low complexity). Ser2197, Ser2201, Ser2204, Ser2207, and Ser2210 each carry phosphoserine; by host; in p58. The ISDR stretch occupies residues 2210–2249 (SLKATCTTHHDSPDADLIEANLLWRQEMGGNITRVESENK). Residues 2210–2275 (SLKATCTTHH…REVSVAAEIL (66 aa)) are interaction with EIF2AK2/PKR. Residues 2249–2306 (KVVILDSFDPLRAEEDEREVSVAAEILRKSKKFPPALPIWARPDYNPPLLESWKSPDY) are NS4B-binding. The SH3-binding motif lies at 2322–2325 (PPIP). The short motif at 2326-2334 (PPRKKRTVV) is the Nuclear localization signal element. Lys2350 participates in a covalent cross-link: Glycyl lysine isopeptide (Lys-Gly) (interchain with G-Cter in ubiquitin). A compositionally biased stretch (polar residues) spans 2351–2371 (TFGSSGSSAVDSGTATAPPDQ). The segment at 2351-2408 (TFGSSGSSAVDSGTATAPPDQTSDDGDKESDVESYSSMPPLEGEPGDPDLSDGSWSTV) is disordered. Residues 2354–2377 (SSGSSAVDSGTATAPPDQTSDDGD) form a V3 region. A compositionally biased stretch (acidic residues) spans 2372–2382 (TSDDGDKESDV). Ser2448 and Ser2461 each carry phosphoserine; by host. In terms of domain architecture, RdRp catalytic spans 2633 to 2751 (PMGFSYDTRC…ICESAGTQED (119 aa)). Mg(2+)-binding residues include Asp2639, Asp2737, and Asp2738. Residues 2990 to 3010 (WFMWCLLLLSVGVGIYLLPNR) traverse the membrane as a helical segment.

Belongs to the hepacivirus polyprotein family. As to quaternary structure, homooligomer. Interacts with E1 (via C-terminus). Interacts with the non-structural protein 5A. Interacts (via N-terminus) with host STAT1 (via SH2 domain); this interaction results in decreased STAT1 phosphorylation and ubiquitin-mediated proteasome-dependent STAT1 degradation, leading to decreased IFN-stimulated gene transcription. Interacts with host STAT3; this interaction constitutively activates STAT3. Interacts with host LTBR receptor. Interacts with host TNFRSF1A receptor and possibly induces apoptosis. Interacts with host HNRPK. Interacts with host YWHAE. Interacts with host UBE3A/E6AP. Interacts with host DDX3X. Interacts with host APOA2. Interacts with host RXRA protein. Interacts with host SP110 isoform 3/Sp110b; this interaction sequesters the transcriptional corepressor SP110 away from the nucleus. Interacts with host CREB3 nuclear transcription protein; this interaction triggers cell transformation. Interacts with host ACY3. Interacts with host C1QR1. Interacts with host RBM24; this interaction, which enhances the interaction of the mature core protein with 5'-UTR, may inhibit viral translation and favor replication. Interacts with host EIF2AK2/PKR; this interaction induces the autophosphorylation of EIF2AK2. Part of the viral assembly initiation complex composed of NS2, E1, E2, NS3, NS4A, NS5A and the mature core protein. In terms of assembly, forms a heterodimer with envelope glycoprotein E2. Interacts with mature core protein. Interacts with protease NS2. The heterodimer E1/E2 interacts with host CLDN1; this interaction plays a role in viral entry into host cell. Interacts with host SPSB2 (via C-terminus). Part of the viral assembly initiation complex composed of NS2, E1, E2, NS3, NS4A, NS5A and the mature core protein. Interacts with host NEURL3; this interaction prevents E1 binding to glycoprotein E2. Forms a heterodimer with envelope glycoprotein E1. Interacts with host CD81 and SCARB1 receptors; these interactions play a role in viral entry into host cell. Interacts with host EIF2AK2/PKR; this interaction inhibits EIF2AK2 and probably allows the virus to evade the innate immune response. Interacts with host CD209/DC-SIGN and CLEC4M/DC-SIGNR. Interact with host SPCS1; this interaction is essential for viral particle assembly. Interacts with protease NS2. The heterodimer E1/E2 interacts with host CLDN1; this interaction plays a role in viral entry into host cell. Part of the viral assembly initiation complex composed of NS2, E1, E2, NS3, NS4A, NS5A and the mature core protein. Interacts with host SLC3A2/4F2hc; the interaction may facilitate viral entry into host cell. Interacts with human PLSCR1. As to quaternary structure, homohexamer. Homoheptamer. Interacts with protease NS2. In terms of assembly, homodimer. Interacts with host SPCS1; this interaction is essential for viral particle assembly. Interacts with envelope glycoprotein E1. Interacts with envelope glycoprotein E2. Interacts with viroporin p7. Interacts with serine protease/helicase NS3. Part of the replication complex composed of NS2, NS3, NS4A, NS4B, NS5A and the RNA-directed RNA polymerase embedded in an ER-derived membranous web. Part of the viral assembly initiation complex composed of NS2, E1, E2, NS3, NS4A, NS5A and the mature core protein. Interacts with protease NS2. Interacts with non-structural protein 4A; this interaction stabilizes the folding of NS3 serine protease. NS3-NS4A interaction is essential for NS3 activation and allows membrane anchorage of the latter. NS3/NS4A complex also prevents phosphorylation of host IRF3, thus preventing the establishment of dsRNA induced antiviral state. Interacts with host MAVS; this interaction leads to the cleavage and inhibition of host MAVS. Interacts with host TICAM1; this interaction leads to the cleavage and inhibition of host TICAM1. Interacts with host TANK-binding kinase/TBK1; this interaction results in the inhibition of the association between TBK1 and IRF3, which leads to the inhibition of IRF3 activation. Interacts with host RBM24. Part of the replication complex composed of NS2, NS3, NS4A, NS4B, NS5A and the RNA-directed RNA polymerase embedded in an ER-derived membranous web. Part of the viral assembly initiation complex composed of NS2, E1, E2, NS3, NS4A, NS5A and the mature core protein. As to quaternary structure, interacts with NS3 serine protease; this interaction stabilizes the folding of NS3 serine protease. NS3-NS4A interaction is essential for NS3 activation and allows membrane anchorage of the latter. Interacts with non-structural protein 5A (via N-terminus). Part of the replication complex composed of NS2, NS3, NS4A, NS4B, NS5A and the RNA-directed RNA polymerase embedded in an ER-derived membranous web. Part of the viral assembly initiation complex composed of NS2, E1, E2, NS3, NS4A, NS5A and the mature core protein. In terms of assembly, homomultimer. Interacts with non-structural protein NS5A. Interacts with host PLA2G4C; this interaction likely initiates the recruitment of replication complexes to lipid droplets. Interacts with host STING; this interaction disrupts the interaction between STING and TBK1 thereby suppressing the interferon signaling. Part of the replication complex composed of NS2, NS3, NS4A, NS4B, NS5A and the RNA-directed RNA polymerase embedded in an ER-derived membranous web. Monomer. Homodimer; dimerization is required for RNA-binding. Interacts with the mature core protein. Interacts (via N-terminus) with non-structural protein 4A. Interacts with non-structural protein 4B. Interacts (via region D2) with RNA-directed RNA polymerase. Part of the viral assembly initiation complex composed of NS2, E1, E2, NS3, NS4A, NS5A and the mature core protein. Part of the replication complex composed of NS2, NS3, NS4A, NS4B, NS5A and the RNA-directed RNA polymerase embedded in an ER-derived membranous web. Interacts with host GRB2. Interacts with host BIN1. Interacts with host PIK3R1. Interacts with host SRCAP. Interacts with host FKBP8. Interacts (via C-terminus) with host VAPB (via MSP domain). Interacts with host EIF2AK2/PKR; this interaction leads to disruption of EIF2AK2 dimerization by NS5A and probably allows the virus to evade the innate immune response. Interacts (via N-terminus) with host PACSIN2 (via N-terminus); this interaction attenuates protein kinase C alpha-mediated phosphorylation of PACSIN2 by disrupting the interaction between PACSIN2 and PRKCA. Interacts (via N-terminus) with host SRC kinase (via SH2 domain). Interacts with most Src-family kinases. Interacts with host IFI27 and SKP2; promotes the ubiquitin-mediated proteasomal degradation of NS5A. Interacts with host GPS2. Interacts with host TNFRSF21; this interaction allows the modulation by the virus of JNK, p38 MAPK, STAT3, and Akt signaling pathways in a DR6-dependent manner. Interacts (via N-terminus) with host CIDEB (via N-terminus); this interaction seems to regulate the association of HCV particles with APOE. Interacts with host CHKA/Choline Kinase-alpha; CHKA bridges host PI4KA and NS5A and potentiates NS5A-stimulated PI4KA activity, which then facilitates the targeting of the ternary complex to the ER for viral replication. Interacts with host SPSB2 (via C-terminus); this interaction targets NS5A for ubiquitination and degradation. Interacts with host RAB18; this interaction may promote the association of NS5A and other replicase components with lipid droplets. Interacts (via region D2) with host PPIA/CYPA; the interaction stimulates RNA-binding ability of NS5A and is dependent on the peptidyl-prolyl cis-trans isomerase activity of PPIA/CYPA. Interacts with host TRIM14; this interaction induces the degradation of NS5A. As to quaternary structure, homooligomer. Interacts with non-structural protein 5A. Interacts with host VAPB. Interacts with host PRK2/PKN2. Interacts with host HNRNPA1 and SEPT6; these interactions facilitate viral replication. Part of the replication complex composed of NS2, NS3, NS4A, NS4B, NS5A and the RNA-directed RNA polymerase. Requires Zn(2+) as cofactor. The cofactor is Mg(2+). Specific enzymatic cleavages in vivo yield mature proteins. The structural proteins, core, E1, E2 and p7 are produced by proteolytic processing by host signal peptidases. The core protein precursor is synthesized as a 23 kDa, which is retained in the ER membrane through the hydrophobic signal peptide. Cleavage by the signal peptidase releases the 21 kDa mature core protein. The cleavage of the core protein precursor occurs between aminoacids 176 and 188 but the exact cleavage site is not known. Some degraded forms of the core protein appear as well during the course of infection. The other proteins (p7, NS2, NS3, NS4A, NS4B, NS5A and NS5B) are cleaved by the viral proteases. Autoprocessing between NS2 and NS3 is mediated by the NS2 cysteine protease catalytic domain and regulated by the NS3 N-terminal domain. Post-translationally, phosphorylated by host PKC and PKA. In terms of processing, ubiquitinated; mediated by UBE3A and leading to core protein subsequent proteasomal degradation. Highly N-glycosylated. Post-translationally, palmitoylation is required for NS2/3 autoprocessing and E2 recruitment to membranes. In terms of processing, palmitoylated. This modification may play a role in its polymerization or in protein-protein interactions. Phosphorylated on serines in a basal form termed p56. p58 is a hyperphosphorylated form of p56. p56 and p58 coexist in the cell in roughly equivalent amounts. Hyperphosphorylation is dependent on the presence of NS4A. Host CSNK1A1/CKI-alpha or RPS6KB1 kinases may be responsible for NS5A phosphorylation. Post-translationally, tyrosine phosphorylation is essential for the interaction with host SRC. In terms of processing, ubiquitinated. Ubiquitination, most probably at Lys-2350, mediated by host IFI27 and SKP2 leads to proteasomal degradation, restricting viral infection. Ubiquitination by host TRIM22 leads to interruption of viral replication. The N-terminus is phosphorylated by host PRK2/PKN2.

It localises to the host endoplasmic reticulum membrane. The protein resides in the host mitochondrion membrane. The protein localises to the virion. Its subcellular location is the host cytoplasm. It is found in the host nucleus. It localises to the host lipid droplet. The protein resides in the virion membrane. The protein localises to the host mitochondrion. Its subcellular location is the host cell membrane. It is found in the host perinuclear region. It carries out the reaction Hydrolysis of four peptide bonds in the viral precursor polyprotein, commonly with Asp or Glu in the P6 position, Cys or Thr in P1 and Ser or Ala in P1'.. It catalyses the reaction a ribonucleoside 5'-triphosphate + H2O = a ribonucleoside 5'-diphosphate + phosphate + H(+). The catalysed reaction is ATP + H2O = ADP + phosphate + H(+). The enzyme catalyses RNA(n) + a ribonucleoside 5'-triphosphate = RNA(n+1) + diphosphate. Inhibited by the antiviral drug hexamethylene amiloride. Inhibition by amantadine appears to be genotype-dependent. Also inhibited by long-alkyl-chain iminosugar derivatives. Its activity is regulated as follows. Activity is up-regulated by PRK2/PKN2-mediated phosphorylation. Its function is as follows. Packages viral RNA to form a viral nucleocapsid, and promotes virion budding. Participates in the viral particle production as a result of its interaction with the non-structural protein 5A. Binds RNA and may function as a RNA chaperone to induce the RNA structural rearrangements taking place during virus replication. Modulates viral translation initiation by interacting with viral IRES and 40S ribosomal subunit. Affects various cell signaling pathways, host immunity and lipid metabolism. Prevents the establishment of cellular antiviral state by blocking the interferon-alpha/beta (IFN-alpha/beta) and IFN-gamma signaling pathways and by blocking the formation of phosphorylated STAT1 and promoting ubiquitin-mediated proteasome-dependent degradation of STAT1. Activates STAT3 leading to cellular transformation. Regulates the activity of cellular genes, including c-myc and c-fos. May repress the promoter of p53, and sequester CREB3 and SP110 isoform 3/Sp110b in the cytoplasm. Represses cell cycle negative regulating factor CDKN1A, thereby interrupting an important check point of normal cell cycle regulation. Targets transcription factors involved in the regulation of inflammatory responses and in the immune response: suppresses TNF-induced NF-kappa-B activation, and activates AP-1. Binds to dendritic cells (DCs) via C1QR1, resulting in down-regulation of T-lymphocytes proliferation. Alters lipid metabolism by interacting with hepatocellular proteins involved in lipid accumulation and storage. Induces up-regulation of FAS promoter activity, and thereby contributes to the increased triglyceride accumulation in hepatocytes (steatosis). Forms a heterodimer with envelope glycoprotein E2, which mediates virus attachment to the host cell, virion internalization through clathrin-dependent endocytosis and fusion with host membrane. Fusion with the host cell is most likely mediated by both E1 and E2, through conformational rearrangements of the heterodimer required for fusion rather than a classical class II fusion mechanism. E1/E2 heterodimer binds host apolipoproteins such as APOB and ApoE thereby forming a lipo-viro-particle (LVP). APOE associated to the LVP allows the initial virus attachment to cell surface receptors such as the heparan sulfate proteoglycans (HSPGs), syndecan-1 (SDC1), syndecan-1 (SDC2), the low-density lipoprotein receptor (LDLR) and scavenger receptor class B type I (SCARB1). The cholesterol transfer activity of SCARB1 allows E2 exposure and binding of E2 to SCARB1 and the tetraspanin CD81. E1/E2 heterodimer binding on CD81 activates the epithelial growth factor receptor (EGFR) signaling pathway. Diffusion of the complex E1-E2-EGFR-SCARB1-CD81 to the cell lateral membrane allows further interaction with Claudin 1 (CLDN1) and occludin (OCLN) to finally trigger HCV entry. In terms of biological role, forms a heterodimer with envelope glycoprotein E1, which mediates virus attachment to the host cell, virion internalization through clathrin-dependent endocytosis and fusion with host membrane. Fusion with the host cell is most likely mediated by both E1 and E2, through conformational rearrangements of the heterodimer required for fusion rather than a classical class II fusion mechanism. The interaction between envelope glycoprotein E2 and host apolipoprotein E/APOE allows the proper assembly, maturation and infectivity of the viral particles. This interaction is probably promoted via the up-regulation of cellular autophagy by the virus. E1/E2 heterodimer binds host apolipoproteins such as APOB and APOE thereby forming a lipo-viro-particle (LVP). APOE associated to the LVP allows the initial virus attachment to cell surface receptors such as the heparan sulfate proteoglycans (HSPGs), syndecan-1 (SDC1), syndecan-1 (SDC2), the low-density lipoprotein receptor (LDLR) and scavenger receptor class B type I (SCARB1). The cholesterol transfer activity of SCARB1 allows E2 exposure and binding of E2 to SCARB1 and the tetraspanin CD81. E1/E2 heterodimer binding on CD81 activates the epithelial growth factor receptor (EGFR) signaling pathway. Diffusion of the complex E1-E2-EGFR-SCARB1-CD81 to the cell lateral membrane allows further interaction with Claudin 1 (CLDN1) and occludin (OCLN) to finally trigger HCV entry. Inhibits host EIF2AK2/PKR activation, preventing the establishment of an antiviral state. Viral ligand for CD209/DC-SIGN and CLEC4M/DC-SIGNR, which are respectively found on dendritic cells (DCs), and on liver sinusoidal endothelial cells and macrophage-like cells of lymph node sinuses. These interactions allow the capture of circulating HCV particles by these cells and subsequent facilitated transmission to permissive cells such as hepatocytes and lymphocyte subpopulations. The interaction between E2 and host amino acid transporter complex formed by SLC3A2 and SLC7A5/LAT1 may facilitate viral entry into host cell. Functionally, ion channel protein that acts as a viroporin and plays an essential role in the assembly, envelopment and secretion of viral particles. Regulates the host cell secretory pathway, which induces the intracellular retention of viral glycoproteins and favors assembly of viral particles. Creates a pore in acidic organelles and releases Ca(2+) and H(+) in the cytoplasm of infected cells, leading to a productive viral infection. High levels of cytoplasmic Ca(2+) may trigger membrane trafficking and transport of viral ER-associated proteins to viroplasms, sites of viral genome replication. This ionic imbalance induces the assembly of the inflammasome complex, which triggers the maturation of pro-IL-1beta into IL-1beta through the action of caspase-1. Targets also host mitochondria and induces mitochondrial depolarization. In addition of its role as a viroporin, acts as a lipid raft adhesion factor. Its function is as follows. Cysteine protease required for the proteolytic auto-cleavage between the non-structural proteins NS2 and NS3. The N-terminus of NS3 is required for the function of NS2 protease (active region NS2-3). Promotes the initiation of viral particle assembly by mediating the interaction between structural and non-structural proteins. Displays three enzymatic activities: serine protease with a chymotrypsin-like fold, NTPase and RNA helicase. NS3 serine protease, in association with NS4A, is responsible for the cleavages of NS3-NS4A, NS4A-NS4B, NS4B-NS5A and NS5A-NS5B. The NS3/NS4A complex prevents phosphorylation of host IRF3, thus preventing the establishment of dsRNA induced antiviral state. The NS3/NS4A complex induces host amino acid transporter component SLC3A2, thus contributing to HCV propagation. NS3 RNA helicase binds to RNA and unwinds both dsDNA and dsRNA in the 3' to 5' direction, and likely resolves RNA complicated stable secondary structures in the template strand. Binds a single ATP and catalyzes the unzipping of a single base pair of dsRNA. Inhibits host antiviral proteins TBK1 and IRF3 thereby preventing the establishment of an antiviral state. Cleaves host MAVS/CARDIF thereby preventing the establishment of an antiviral state. Cleaves host TICAM1/TRIF, thereby disrupting TLR3 signaling and preventing the establishment of an antiviral state. In terms of biological role, induces a specific membrane alteration that serves as a scaffold for the virus replication complex. This membrane alteration gives rise to the so-called ER-derived membranous web that contains the replication complex. NS4B self-interaction contributes to its function in membranous web formation. Promotes host TRIF protein degradation in a CASP8-dependent manner thereby inhibiting host TLR3-mediated interferon signaling. Disrupts the interaction between STING and TBK1 contributing to the inhibition of interferon signaling. Functionally, phosphorylated protein that is indispensable for viral replication and assembly. Both hypo- and hyperphosphorylated states are required for the viral life cycle. The hyperphosphorylated form of NS5A is an inhibitor of viral replication. Involved in RNA-binding and especially in binding to the viral genome. Zinc is essential for RNA-binding. Participates in the viral particle production as a result of its interaction with the mature viral core protein. Its interaction with host VAPB may target the viral replication complex to vesicles. Down-regulates viral IRES translation initiation. Mediates interferon resistance, presumably by interacting with and inhibiting host EIF2AK2/PKR. Prevents BIN1-induced apoptosis. Acts as a transcriptional activator of some host genes important for viral replication when localized in the nucleus. Via the interaction with host PACSIN2, modulates lipid droplet formation in order to promote virion assembly. Modulates TNFRSF21/DR6 signaling pathway for viral propagation. Its function is as follows. RNA-dependent RNA polymerase that performs primer-template recognition and RNA synthesis during viral replication. Initiates RNA transcription/replication at a flavin adenine dinucleotide (FAD), resulting in a 5'- FAD cap on viral RNAs. In this way, recognition of viral 5' RNA by host pattern recognition receptors can be bypassed, thereby evading activation of antiviral pathways. Peptide cofactor which forms a non-covalent complex with the N-terminal of NS3 serine protease. The NS3/NS4A complex prevents phosphorylation of host IRF3, thus preventing the establishment of dsRNA induced antiviral state. The NS3/NS4A complex induces host amino acid transporter component SLC3A2, thus contributing to HCV propagation. This Homo sapiens (Human) protein is Genome polyprotein.